The chain runs to 288 residues: DegV domain-containing protein MYPU_3590 (288 aa).

The region spanning 3–275 (IAIVIDSSSG…LGAIAISLVK (273 aa)) is the DegV domain. Ser-61 and Ser-92 together coordinate hexadecanoate.

In terms of biological role, may bind long-chain fatty acids, such as palmitate, and may play a role in lipid transport or fatty acid metabolism. The protein is DegV domain-containing protein MYPU_3590 of Mycoplasmopsis pulmonis (strain UAB CTIP) (Mycoplasma pulmonis).